The primary structure comprises 455 residues: Phosphoglucosamine mutase (455 aa).

Serine 104 serves as the catalytic Phosphoserine intermediate. Residues serine 104, aspartate 243, aspartate 245, and aspartate 247 each contribute to the Mg(2+) site. Serine 104 is subject to Phosphoserine.

It belongs to the phosphohexose mutase family. The cofactor is Mg(2+). Post-translationally, activated by phosphorylation.

The catalysed reaction is alpha-D-glucosamine 1-phosphate = D-glucosamine 6-phosphate. In terms of biological role, catalyzes the conversion of glucosamine-6-phosphate to glucosamine-1-phosphate. The protein is Phosphoglucosamine mutase of Synechococcus sp. (strain CC9311).